Here is a 542-residue protein sequence, read N- to C-terminus: Hydroxylamine reductase (542 aa).

Residues Cys-3, Cys-6, Cys-15, and Cys-21 each contribute to the [4Fe-4S] cluster site. 8 residues coordinate hybrid [4Fe-2O-2S] cluster: His-243, Glu-267, Cys-311, Cys-398, Cys-426, Cys-451, Glu-485, and Lys-487. Cys-398 is modified (cysteine persulfide).

It belongs to the HCP family. Requires [4Fe-4S] cluster as cofactor. Hybrid [4Fe-2O-2S] cluster is required as a cofactor.

The protein resides in the cytoplasm. The catalysed reaction is A + NH4(+) + H2O = hydroxylamine + AH2 + H(+). In terms of biological role, catalyzes the reduction of hydroxylamine to form NH(3) and H(2)O. The protein is Hydroxylamine reductase of Syntrophobacter fumaroxidans (strain DSM 10017 / MPOB).